We begin with the raw amino-acid sequence, 106 residues long: Large ribosomal subunit protein uL24 (106 aa).

The protein belongs to the universal ribosomal protein uL24 family. In terms of assembly, part of the 50S ribosomal subunit.

One of two assembly initiator proteins, it binds directly to the 5'-end of the 23S rRNA, where it nucleates assembly of the 50S subunit. Its function is as follows. One of the proteins that surrounds the polypeptide exit tunnel on the outside of the subunit. The chain is Large ribosomal subunit protein uL24 from Polaromonas naphthalenivorans (strain CJ2).